The primary structure comprises 513 residues: GMP synthase [glutamine-hydrolyzing] (513 aa).

Positions 3 to 200 constitute a Glutamine amidotransferase type-1 domain; that stretch reads SVLVLDFGSQ…LIDIAGITPD (198 aa). Cys80 (nucleophile) is an active-site residue. Residues His174 and Glu176 contribute to the active site. Residues 201–388 form the GMPS ATP-PPase domain; sequence WSPKHFIDHQ…LGIAEDILMR (188 aa). 228–234 is a binding site for ATP; sequence SGGVDSS.

Homodimer.

The catalysed reaction is XMP + L-glutamine + ATP + H2O = GMP + L-glutamate + AMP + diphosphate + 2 H(+). Its pathway is purine metabolism; GMP biosynthesis; GMP from XMP (L-Gln route): step 1/1. In terms of biological role, catalyzes the synthesis of GMP from XMP. This Chlorobium limicola (strain DSM 245 / NBRC 103803 / 6330) protein is GMP synthase [glutamine-hydrolyzing].